We begin with the raw amino-acid sequence, 399 residues long: 1-deoxy-D-xylulose 5-phosphate reductoisomerase (399 aa).

The NADPH site is built by Thr11, Gly12, Ser13, Ile14, Gly37, Asn39, and Asn125. Lys126 provides a ligand contact to 1-deoxy-D-xylulose 5-phosphate. Position 127 (Glu127) interacts with NADPH. Residue Asp151 coordinates Mn(2+). 1-deoxy-D-xylulose 5-phosphate-binding residues include Ser152, Glu153, Ser177, and His200. Residue Glu153 participates in Mn(2+) binding. Gly206 provides a ligand contact to NADPH. Positions 213, 218, 219, and 222 each coordinate 1-deoxy-D-xylulose 5-phosphate. Glu222 contacts Mn(2+).

Belongs to the DXR family. Mg(2+) is required as a cofactor. The cofactor is Mn(2+).

The enzyme catalyses 2-C-methyl-D-erythritol 4-phosphate + NADP(+) = 1-deoxy-D-xylulose 5-phosphate + NADPH + H(+). It participates in isoprenoid biosynthesis; isopentenyl diphosphate biosynthesis via DXP pathway; isopentenyl diphosphate from 1-deoxy-D-xylulose 5-phosphate: step 1/6. Functionally, catalyzes the NADPH-dependent rearrangement and reduction of 1-deoxy-D-xylulose-5-phosphate (DXP) to 2-C-methyl-D-erythritol 4-phosphate (MEP). The polypeptide is 1-deoxy-D-xylulose 5-phosphate reductoisomerase (Nostoc sp. (strain PCC 7120 / SAG 25.82 / UTEX 2576)).